The chain runs to 292 residues: Aquaporin-3 (292 aa).

Over 1–24 (MGRQKELVSRCGEMLHIRYRLLRQ) the chain is Cytoplasmic. A helical transmembrane segment spans residues 25–42 (ALAECLGTLILVMFGCGS). The Extracellular portion of the chain corresponds to 43–56 (VAQVVLSRGTHGGF). A helical membrane pass occupies residues 57-74 (LTINLAFGFAVTLGILIA). Residues 75 to 78 (GQVS) are Cytoplasmic-facing. An intramembrane region (discontinuously helical) is located at residues 79–92 (GAHLNPAVTFAMCF). The NPA 1 motif lies at 83–85 (NPA). Residues 93–100 (LAREPWIK) lie on the Cytoplasmic side of the membrane. The helical transmembrane segment at 101–121 (LPIYTLAQTLGAFLGAGIVFG) threads the bilayer. Topologically, residues 122–159 (LYYDAIWHFADNQLFVSGPNGTAGIFATYPSGHLDMIN) are extracellular. An N-linked (GlcNAc...) asparagine glycan is attached at asparagine 141. Residues 160 to 177 (GFFDQFIGTASLIVCVLA) form a helical membrane-spanning segment. The Cytoplasmic portion of the chain corresponds to 178 to 189 (IVDPYNNPVPRG). The helical transmembrane segment at 190–206 (LEAFTVGLVVLVIGTSM) threads the bilayer. Topologically, residues 207-210 (GFNS) are extracellular. Positions 211–224 (GYAVNPARDFGPRL) form an intramembrane region, discontinuously helical. Positions 215–217 (NPA) match the NPA 2 motif. The Extracellular segment spans residues 225–242 (FTALAGWGSAVFTTGQHW). The helical transmembrane segment at 243-264 (WWVPIVSPLLGSIAGVFVYQLM) threads the bilayer. Residues 265–292 (IGCHLEQPPPSNEEENVKLAHVKHKEQI) are Cytoplasmic-facing.

It belongs to the MIP/aquaporin (TC 1.A.8) family. Homotetramer; each monomer provides an independent glycerol/water pore. Could also exist in other oligomeric states. Widely expressed in epithelial cells of kidney (collecting ducts) and airways, in keratinocytes, immature dendritic cells and erythrocytes. Isoform 2 is not detectable in erythrocytes at the protein level.

It localises to the cell membrane. Its subcellular location is the basolateral cell membrane. The enzyme catalyses glycerol(in) = glycerol(out). It carries out the reaction H2O(in) = H2O(out). The catalysed reaction is H2O2(out) = H2O2(in). It catalyses the reaction urea(in) = urea(out). Its activity is regulated as follows. Glycerol transport is regulated by pH, with the porin being permeable to glycerol at pH 7.4 but not at pH 5.5. Water permeability, however, is not influenced by pH. Aquaglyceroporins form homotetrameric transmembrane channels, with each monomer independently mediating glycerol and water transport across the plasma membrane along their osmotic gradient. Could also be permeable to urea. Also participates in cell permeability to H2O2 and H2O2-mediated signaling. In skin, transports glycerol to the epidermis and stratum corneum, where it maintains hydration, elasticity, and supports lipid biosynthesis for barrier repair. In kidney, contributes to the reabsorption of water, helping the body maintain proper fluid balance. The chain is Aquaporin-3 from Homo sapiens (Human).